We begin with the raw amino-acid sequence, 361 residues long: Peptide chain release factor 1 (361 aa).

N5-methylglutamine is present on Gln237. Residues 284 to 296 (EDEKRRSEEDSTR) are compositionally biased toward basic and acidic residues. The segment at 284 to 305 (EDEKRRSEEDSTRRNLVSSGDR) is disordered.

The protein belongs to the prokaryotic/mitochondrial release factor family. Post-translationally, methylated by PrmC. Methylation increases the termination efficiency of RF1.

The protein resides in the cytoplasm. Peptide chain release factor 1 directs the termination of translation in response to the peptide chain termination codons UAG and UAA. In Shewanella piezotolerans (strain WP3 / JCM 13877), this protein is Peptide chain release factor 1.